Reading from the N-terminus, the 347-residue chain is Very-long-chain 3-oxoacyl-CoA reductase (347 aa).

A helical transmembrane segment spans residues 22–42 (LLWSIFGFGVLKATTLILRIM). Positions 68, 122, 149, 223, 227, 256, and 258 each coordinate NADP(+). Y223 acts as the Proton donor in catalysis. The active-site Lowers pKa of active site Tyr is the K227.

Belongs to the short-chain dehydrogenases/reductases (SDR) family.

It localises to the endoplasmic reticulum membrane. The enzyme catalyses a very-long-chain (3R)-3-hydroxyacyl-CoA + NADP(+) = a very-long-chain 3-oxoacyl-CoA + NADPH + H(+). Its pathway is lipid metabolism; fatty acid biosynthesis. Component of the microsomal membrane bound fatty acid elongation system, which produces the 26-carbon very long-chain fatty acids (VLCFA) from palmitate. Catalyzes the reduction of the 3-ketoacyl-CoA intermediate that is formed in each cycle of fatty acid elongation. VLCFAs serve as precursors for ceramide and sphingolipids. The sequence is that of Very-long-chain 3-oxoacyl-CoA reductase from Vanderwaltozyma polyspora (strain ATCC 22028 / DSM 70294 / BCRC 21397 / CBS 2163 / NBRC 10782 / NRRL Y-8283 / UCD 57-17) (Kluyveromyces polysporus).